The following is a 439-amino-acid chain: Nuclear distribution protein PAC1 (439 aa).

Positions 55-90 (NSIVRLQSKIMELEKNCEELQKSIDEQQSSTNQISN) form a coiled coil. WD repeat units follow at residues 106 to 145 (TLDA…LPLQ), 149 to 193 (AHMD…TLSH), 199 to 240 (GHEH…CIKS), 243 to 282 (PHTQ…SMGI), 295 to 335 (IPDP…FIPH), 355 to 392 (DHNS…LSTT), and 402 to 438 (NKGF…TSFM).

It belongs to the WD repeat LIS1/nudF family. As to quaternary structure, self-associates. Interacts with NDL1 and dynein.

Its subcellular location is the cytoplasm. It is found in the cytoskeleton. It localises to the spindle pole. Functionally, positively regulates the activity of the minus-end directed microtubule motor protein dynein. Plays a central role in positioning the mitotic spindle at the bud neck during cell division. Targets cytoplasmic dynein to microtubule plus ends, thereby promoting dynein-mediated microtubule sliding along the bud cortex and consequently the movement of the mitotic spindle to the bud neck. This chain is Nuclear distribution protein PAC1, found in Kluyveromyces lactis (strain ATCC 8585 / CBS 2359 / DSM 70799 / NBRC 1267 / NRRL Y-1140 / WM37) (Yeast).